Reading from the N-terminus, the 134-residue chain is Histone H2A (134 aa).

The span at 1 to 10 (MTGGKSGGKA) shows a compositional bias: gly residues. The tract at residues 1 to 26 (MTGGKSGGKASGSKSSAQSRSSKAGL) is disordered. N6-acetyllysine occurs at positions 5 and 9. The span at 11–25 (SGSKSSAQSRSSKAG) shows a compositional bias: low complexity. At Gln-107 the chain carries N5-methylglutamine. The residue at position 131 (Ser-131) is a Phosphoserine. A [ST]-Q motif motif is present at residues 131–132 (SQ).

This sequence belongs to the histone H2A family. As to quaternary structure, the nucleosome is a histone octamer containing two molecules each of H2A, H2B, H3 and H4 assembled in one H3-H4 heterotetramer and two H2A-H2B heterodimers. The octamer wraps approximately 147 bp of DNA. Post-translationally, phosphorylated to form H2AS128ph (gamma-H2A) in response to DNA double-strand breaks (DSBs) generated by exogenous genotoxic agents and by stalled replication forks. Phosphorylation is dependent on the DNA damage checkpoint kinases MEC1/ATR and TEL1/ATM, spreads on either side of a detected DSB site and may mark the surrounding chromatin for recruitment of proteins required for DNA damage signaling and repair. Gamma-H2A is removed from the DNA prior to the strand invasion-primer extension step of the repair process and subsequently dephosphorylated. Dephosphorylation is necessary for efficient recovery from the DNA damage checkpoint. Acetylated by ESA1 to form H2AK4ac and H2AK7ac.

It localises to the nucleus. It is found in the chromosome. In terms of biological role, core component of nucleosome which plays a central role in DNA double strand break (DSB) repair. Nucleosomes wrap and compact DNA into chromatin, limiting DNA accessibility to the cellular machineries which require DNA as a template. Histones thereby play a central role in transcription regulation, DNA repair, DNA replication and chromosomal stability. DNA accessibility is regulated via a complex set of post-translational modifications of histones, also called histone code, and nucleosome remodeling. This is Histone H2A (HTA1) from Phaeosphaeria nodorum (strain SN15 / ATCC MYA-4574 / FGSC 10173) (Glume blotch fungus).